Reading from the N-terminus, the 232-residue chain is Small ribosomal subunit protein uS3 (232 aa).

One can recognise a KH type-2 domain in the interval 39–107 (IRAILHKELK…DVVINIVEIR (69 aa)).

This sequence belongs to the universal ribosomal protein uS3 family. Part of the 30S ribosomal subunit. Forms a tight complex with proteins S10 and S14.

Binds the lower part of the 30S subunit head. Binds mRNA in the 70S ribosome, positioning it for translation. This is Small ribosomal subunit protein uS3 from Rhodopseudomonas palustris (strain BisA53).